The chain runs to 419 residues: UDP-N-acetylglucosamine 1-carboxyvinyltransferase (419 aa).

22–23 is a phosphoenolpyruvate binding site; it reads KN. Arginine 91 is a binding site for UDP-N-acetyl-alpha-D-glucosamine. The active-site Proton donor is the cysteine 115. 2-(S-cysteinyl)pyruvic acid O-phosphothioketal is present on cysteine 115. UDP-N-acetyl-alpha-D-glucosamine is bound by residues 120 to 124, 160 to 163, aspartate 305, and valine 327; these read RPVDL and KVSV.

It belongs to the EPSP synthase family. MurA subfamily.

The protein localises to the cytoplasm. It carries out the reaction phosphoenolpyruvate + UDP-N-acetyl-alpha-D-glucosamine = UDP-N-acetyl-3-O-(1-carboxyvinyl)-alpha-D-glucosamine + phosphate. It participates in cell wall biogenesis; peptidoglycan biosynthesis. Its function is as follows. Cell wall formation. Adds enolpyruvyl to UDP-N-acetylglucosamine. This is UDP-N-acetylglucosamine 1-carboxyvinyltransferase from Salmonella schwarzengrund (strain CVM19633).